A 401-amino-acid chain; its full sequence is Chalcone synthase 5 (401 aa).

Cysteine 168 is a catalytic residue.

This sequence belongs to the thiolase-like superfamily. Chalcone/stilbene synthases family.

It catalyses the reaction (E)-4-coumaroyl-CoA + 3 malonyl-CoA + 3 H(+) = 2',4,4',6'-tetrahydroxychalcone + 3 CO2 + 4 CoA. The protein operates within secondary metabolite biosynthesis; flavonoid biosynthesis. Functionally, the primary product of this enzyme is 4,2',4',6'-tetrahydroxychalcone (also termed naringenin-chalcone or chalcone) which can under specific conditions spontaneously isomerize into naringenin. This Sorghum bicolor (Sorghum) protein is Chalcone synthase 5 (CHS5).